We begin with the raw amino-acid sequence, 364 residues long: Chorismate synthase (364 aa).

Positions 41–60 are disordered; sequence MQHDLDRRRPGTSRYTTARR. The NADP(+) site is built by Arg48 and Arg54. FMN is bound by residues 125-127, 238-239, Gly278, 293-297, and Arg319; these read RSS, NA, and KPTSS.

It belongs to the chorismate synthase family. In terms of assembly, homotetramer. FMNH2 is required as a cofactor.

It carries out the reaction 5-O-(1-carboxyvinyl)-3-phosphoshikimate = chorismate + phosphate. It participates in metabolic intermediate biosynthesis; chorismate biosynthesis; chorismate from D-erythrose 4-phosphate and phosphoenolpyruvate: step 7/7. Its function is as follows. Catalyzes the anti-1,4-elimination of the C-3 phosphate and the C-6 proR hydrogen from 5-enolpyruvylshikimate-3-phosphate (EPSP) to yield chorismate, which is the branch point compound that serves as the starting substrate for the three terminal pathways of aromatic amino acid biosynthesis. This reaction introduces a second double bond into the aromatic ring system. This Shewanella baltica (strain OS223) protein is Chorismate synthase.